A 125-amino-acid chain; its full sequence is UPF0332 protein AF_0298 (125 aa).

The protein belongs to the UPF0332 family.

This is UPF0332 protein AF_0298 from Archaeoglobus fulgidus (strain ATCC 49558 / DSM 4304 / JCM 9628 / NBRC 100126 / VC-16).